An 84-amino-acid polypeptide reads, in one-letter code: ATP synthase subunit c (84 aa).

Transmembrane regions (helical) follow at residues 9–29 (IIGA…GFAI) and 54–74 (IVAG…LLFI).

Belongs to the ATPase C chain family. In terms of assembly, F-type ATPases have 2 components, F(1) - the catalytic core - and F(0) - the membrane proton channel. F(1) has five subunits: alpha(3), beta(3), gamma(1), delta(1), epsilon(1). F(0) has three main subunits: a(1), b(2) and c(10-14). The alpha and beta chains form an alternating ring which encloses part of the gamma chain. F(1) is attached to F(0) by a central stalk formed by the gamma and epsilon chains, while a peripheral stalk is formed by the delta and b chains.

The protein resides in the cell inner membrane. F(1)F(0) ATP synthase produces ATP from ADP in the presence of a proton or sodium gradient. F-type ATPases consist of two structural domains, F(1) containing the extramembraneous catalytic core and F(0) containing the membrane proton channel, linked together by a central stalk and a peripheral stalk. During catalysis, ATP synthesis in the catalytic domain of F(1) is coupled via a rotary mechanism of the central stalk subunits to proton translocation. Functionally, key component of the F(0) channel; it plays a direct role in translocation across the membrane. A homomeric c-ring of between 10-14 subunits forms the central stalk rotor element with the F(1) delta and epsilon subunits. This chain is ATP synthase subunit c, found in Actinobacillus pleuropneumoniae serotype 7 (strain AP76).